Reading from the N-terminus, the 238-residue chain is Oil body-associated protein 1A (238 aa).

Belongs to the OBAP family. Expressed in seeds, but not in leaves or roots. Highest expression in scutellum. Detected in embryo axis and endosperm.

It localises to the lipid droplet. The polypeptide is Oil body-associated protein 1A (Zea mays (Maize)).